A 199-amino-acid chain; its full sequence is Nuclear transcription factor Y subunit C-2 (199 aa).

It belongs to the NFYC/HAP5 subunit family. In terms of assembly, heterotrimeric transcription factor composed of three components, NF-YA, NF-YB and NF-YC. NF-YB and NF-YC must interact and dimerize for NF-YA association and DNA binding. Interacts with HTT1 in both cytoplasm and nucleus. Ubiquitous.

The protein resides in the nucleus. Its subcellular location is the cytoplasm. In terms of biological role, stimulates the transcription of various genes by recognizing and binding to a CCAAT motif in promoters. The sequence is that of Nuclear transcription factor Y subunit C-2 (NFYC2) from Arabidopsis thaliana (Mouse-ear cress).